Reading from the N-terminus, the 562-residue chain is Glutamate--tRNA ligase (562 aa).

The short motif at 101–111 (PEPNGYPHIGH) is the 'HIGH' region element.

Belongs to the class-I aminoacyl-tRNA synthetase family. Glutamate--tRNA ligase type 2 subfamily.

Its subcellular location is the cytoplasm. The enzyme catalyses tRNA(Glu) + L-glutamate + ATP = L-glutamyl-tRNA(Glu) + AMP + diphosphate. In terms of biological role, catalyzes the attachment of glutamate to tRNA(Glu) in a two-step reaction: glutamate is first activated by ATP to form Glu-AMP and then transferred to the acceptor end of tRNA(Glu). This is Glutamate--tRNA ligase from Cenarchaeum symbiosum (strain A).